A 112-amino-acid polypeptide reads, in one-letter code: uncharacterized protein (112 aa).

Positions 1 to 11 (MAESVASSESL) are enriched in polar residues. The tract at residues 1-32 (MAESVASSESLPQMKPEEPESKKSPSREAIPK) is disordered. Over residues 15 to 31 (KPEEPESKKSPSREAIP) the composition is skewed to basic and acidic residues. A helical transmembrane segment spans residues 81–101 (VVFIFMIAIMSMLVIGLVVCG).

The protein resides in the membrane. This is an uncharacterized protein from Encephalitozoon cuniculi (strain GB-M1) (Microsporidian parasite).